The sequence spans 394 residues: Flagellin B (394 aa).

This sequence belongs to the bacterial flagellin family.

Its subcellular location is the secreted. It localises to the bacterial flagellum. Flagellin is the subunit protein which polymerizes to form the filaments of bacterial flagella. The chain is Flagellin B (flaB) from Rhizobium meliloti (strain 1021) (Ensifer meliloti).